A 241-amino-acid polypeptide reads, in one-letter code: Fatty acid metabolism regulator protein (241 aa).

Residues 11–79 (QSPAALAEEY…HGKPTKVNNI (69 aa)) form the HTH gntR-type domain. Positions 39–58 (ERDLADKIGVTRTTLREVLQ) form a DNA-binding region, H-T-H motif.

In terms of assembly, homodimer.

It is found in the cytoplasm. Functionally, multifunctional regulator of fatty acid metabolism. This is Fatty acid metabolism regulator protein from Haemophilus influenzae (strain 86-028NP).